A 331-amino-acid chain; its full sequence is DNA fragmentation factor subunit alpha (331 aa).

Methionine 1 bears the N-acetylmethionine mark. In terms of domain architecture, CIDE-N spans 17-96 (PLKPCLLRRN…ALACNEKWIY (80 aa)). Position 243 is a phosphothreonine (threonine 243). A disordered region spans residues 306 to 331 (LRNLSARRSPLPGEPQRPKRAKRDSS).

As to quaternary structure, heterodimer of DFFA and DFFB. Caspase-3 cleaves DFF45 at 2 sites to generate an active factor.

It localises to the cytoplasm. In terms of biological role, inhibitor of the caspase-activated DNase (DFF40). The polypeptide is DNA fragmentation factor subunit alpha (Dffa) (Mus musculus (Mouse)).